The chain runs to 274 residues: 2-succinyl-6-hydroxy-2,4-cyclohexadiene-1-carboxylate synthase (274 aa).

The protein belongs to the AB hydrolase superfamily. MenH family. As to quaternary structure, monomer.

It carries out the reaction 5-enolpyruvoyl-6-hydroxy-2-succinyl-cyclohex-3-ene-1-carboxylate = (1R,6R)-6-hydroxy-2-succinyl-cyclohexa-2,4-diene-1-carboxylate + pyruvate. It participates in quinol/quinone metabolism; 1,4-dihydroxy-2-naphthoate biosynthesis; 1,4-dihydroxy-2-naphthoate from chorismate: step 3/7. It functions in the pathway quinol/quinone metabolism; menaquinone biosynthesis. In terms of biological role, catalyzes a proton abstraction reaction that results in 2,5-elimination of pyruvate from 2-succinyl-5-enolpyruvyl-6-hydroxy-3-cyclohexene-1-carboxylate (SEPHCHC) and the formation of 2-succinyl-6-hydroxy-2,4-cyclohexadiene-1-carboxylate (SHCHC). The chain is 2-succinyl-6-hydroxy-2,4-cyclohexadiene-1-carboxylate synthase from Yersinia enterocolitica serotype O:8 / biotype 1B (strain NCTC 13174 / 8081).